The primary structure comprises 663 residues: Polyunsaturated fatty acid lipoxygenase ALOX12 (663 aa).

Positions 2-114 (GRYRIRVATG…ILSLPEGTAR (113 aa)) constitute a PLAT domain. Residues 115–663 (LPGDNALDMF…PSCIENSVTI (549 aa)) form the Lipoxygenase domain. Phosphoserine is present on S246. H360, H365, H540, N544, and I663 together coordinate Fe cation.

It belongs to the lipoxygenase family. Fe cation is required as a cofactor. In terms of tissue distribution, expressed in vascular smooth muscle cells.

It localises to the cytoplasm. The protein resides in the cytosol. It is found in the membrane. It carries out the reaction (5Z,8Z,11Z,14Z)-eicosatetraenoate + O2 = (12S)-hydroperoxy-(5Z,8Z,10E,14Z)-eicosatetraenoate. It catalyses the reaction (5Z,8Z,11Z,14Z)-eicosatetraenoate + O2 = (15S)-hydroperoxy-(5Z,8Z,11Z,13E)-eicosatetraenoate. The catalysed reaction is 2 leukotriene A4 + O2 + 2 H2O = 2 lipoxin A4. The enzyme catalyses 2 leukotriene A4 + O2 + 2 H2O = 2 lipoxin B4. It carries out the reaction (14S)-hydroperoxy-(4Z,7Z,10Z,12E,16Z,19Z)-docosahexaenoate = (13S,14S)-epoxy-(4Z,7Z,9E,11E,16Z,19Z)-docosahexaenoate + H2O. It catalyses the reaction N-(5Z,8Z,11Z,14Z)-eicosatetraenoyl-L-alanine + O2 = N-(15S)-hydroperoxy-(5Z,8Z,11Z,13E)-eicosatetraenoyl-alanine. The catalysed reaction is N-(5Z,8Z,11Z,14Z)-eicosatetraenoyl-L-alanine + O2 = N-(12S)-hydroperoxy-(5Z,8Z,10E,14Z)-eicosatetraenoyl-alanine. The enzyme catalyses N-(5Z,8Z,11Z,14Z)-eicosatetraenoyl-gamma-aminobutanoate + O2 = N-(15S)-hydroperoxy-(5Z,8Z,11Z,13E)-eicosatetraenoyl-gamma-aminobutanoate. It carries out the reaction N-(5Z,8Z,11Z,14Z)-eicosatetraenoyl-gamma-aminobutanoate + O2 = N-(12S)-hydroperoxy-(5Z,8Z,10E,14Z)-eicosatetraenoyl-gamma-aminobutanoate. It catalyses the reaction N-(5Z,8Z,11Z,14Z)-eicosatetraenoyl-glycine + O2 = N-(15S)-hydroperoxy-(5Z,8Z,11Z,13E)-eicosatetraenoyl-glycine. The catalysed reaction is N-(5Z,8Z,11Z,14Z)-eicosatetraenoyl-glycine + O2 = N-(12S)-hydroperoxy-(5Z,8Z,10E,14Z)-eicosatetraenoyl-glycine. The enzyme catalyses N-(5Z,8Z,11Z,14Z)-eicosatetraenoyl-taurine + O2 = N-(12S)-hydroperoxy-(5Z,8Z,10E,14Z)-eicosatetraenoyl-taurine. It carries out the reaction N-(5Z,8Z,11Z,14Z)-eicosatetraenoyl-taurine + O2 = N-(15S)-hydroperoxy-(5Z,8Z,11Z,13E)-eicosatetraenoyl-taurine. It catalyses the reaction (4Z,7Z,10Z,13Z,16Z,19Z)-docosahexaenoate + O2 = (14S)-hydroperoxy-(4Z,7Z,10Z,12E,16Z,19Z)-docosahexaenoate. The catalysed reaction is (7S)-hydroperoxy-(4Z,8E,10Z,13Z,16Z,19Z)-docosahexaenoate + O2 = (7S,14S)-dihydroperoxy-(4Z,8E,10Z,12E,16Z,19Z)-docosahexaenoate. The enzyme catalyses (7S)-hydroperoxy-(4Z,8E,10Z,13Z,16Z,19Z)-docosahexaenoate + O2 = (7S,17S)-dihydroperoxy-(4Z,8E,10Z,13Z,15E,19Z)-docosahexaenoate. It carries out the reaction (5Z,8Z,11Z,14Z,17Z)-eicosapentaenoate + O2 = (12S)-hydroperoxy-(5Z,8Z,10E,14Z,17Z)-eicosapentaenoate. It catalyses the reaction (8Z,11Z,14Z)-eicosatrienoate + O2 = (12S)-hydroperoxy-(8Z,10E,14Z)-eicosatrienoate. The catalysed reaction is (9Z,12Z)-octadecadienoate + O2 = (13S)-hydroperoxy-(9Z,11E)-octadecadienoate. The enzyme catalyses (5Z,8Z,11Z)-eicosatrienoate + O2 = (12S)-hydroperoxy-(5Z,8Z,10E)-eicosatrienoate. It carries out the reaction (14R,15S)-epoxy-(5Z,8Z,11Z)-eicosatrienoate + O2 = (12S)-hydroperoxy-(14R,15S)-epoxy-(5Z,8Z,10E)-eicosatrienoate. It catalyses the reaction (14S,15R)-epoxy-(5Z,8Z,11Z)-eicosatrienoate + O2 = (12S)-hydroperoxy-(14S,15R)-epoxy-(5Z,8Z,10E)-eicosatrienoate. It functions in the pathway lipid metabolism; hydroperoxy eicosatetraenoic acid biosynthesis. Its activity is regulated as follows. Activated by EGF. Arachidonic acid conversion is inhibited by (13S,14S)-epoxy-(4Z,7Z,9E,11E,16Z,19Z)-docosahexaenoate (13S,14S-epoxy-DHA). Arachidonate 12-lipoxygenase activity is decreased when PH decreases from 7.4 to 6. Catalyzes the regio and stereo-specific incorporation of molecular oxygen into free and esterified polyunsaturated fatty acids generating lipid hydroperoxides that can be further reduced to the corresponding hydroxy species. Mainly converts arachidonate ((5Z,8Z,11Z,14Z)-eicosatetraenoate) to the specific bioactive lipid (12S)-hydroperoxyeicosatetraenoate/(12S)-HPETE. Through the production of bioactive lipids like (12S)-HPETE it regulates different biological processes including platelet activation. It can also catalyze the epoxidation of double bonds of polyunsaturated fatty acids such as (14S)-hydroperoxy-docosahexaenoate/(14S)-HPDHA resulting in the formation of (13S,14S)-epoxy-DHA. Furthermore, it may participate in the sequential oxidations of DHA ((4Z,7Z,10Z,13Z,16Z,19Z)-docosahexaenoate) to generate specialized pro-resolving mediators (SPMs) like resolvin D5 ((7S,17S)-diHPDHA) and (7S,14S)-diHPDHA, that actively down-regulate the immune response and have anti-aggregation properties with platelets. An additional function involves a multistep process by which it transforms leukotriene A4/LTA4 into the bioactive lipids lipoxin A4/LXA4 and lipoxin B4/LXB4, both are vasoactive and LXA4 may regulate neutrophil function via occupancy of specific recognition sites. Can also peroxidize linoleate ((9Z,12Z)-octadecadienoate) to (13S)-hydroperoxyoctadecadienoate/ (13S-HPODE). Due to its role in regulating both the expression of the vascular endothelial growth factor (VEGF, an angiogenic factor involved in the survival and metastasis of solid tumors) and the expression of integrin beta-1 (known to affect tumor cell migration and proliferation), it can be regarded as protumorigenic. Important for cell survival, as it may play a role not only in proliferation but also in the prevention of apoptosis in vascular smooth muscle cells. The chain is Polyunsaturated fatty acid lipoxygenase ALOX12 from Homo sapiens (Human).